We begin with the raw amino-acid sequence, 466 residues long: 3-isopropylmalate dehydratase large subunit (466 aa).

Residues C347, C407, and C410 each contribute to the [4Fe-4S] cluster site.

This sequence belongs to the aconitase/IPM isomerase family. LeuC type 1 subfamily. As to quaternary structure, heterodimer of LeuC and LeuD. [4Fe-4S] cluster serves as cofactor.

The catalysed reaction is (2R,3S)-3-isopropylmalate = (2S)-2-isopropylmalate. Its pathway is amino-acid biosynthesis; L-leucine biosynthesis; L-leucine from 3-methyl-2-oxobutanoate: step 2/4. In terms of biological role, catalyzes the isomerization between 2-isopropylmalate and 3-isopropylmalate, via the formation of 2-isopropylmaleate. The polypeptide is 3-isopropylmalate dehydratase large subunit (Shewanella loihica (strain ATCC BAA-1088 / PV-4)).